Here is a 90-residue protein sequence, read N- to C-terminus: U7-theraphotoxin-Hhn1a 1 (90 aa).

An N-terminal signal peptide occupies residues 1-19 (MKTAIFTVVLALAVFAVLS). A propeptide spanning residues 20 to 50 (FGWEANEKALSEEFTELIHEKEAASETEARE) is cleaved from the precursor. 3 disulfides stabilise this stretch: Cys-51/Cys-65, Cys-58/Cys-70, and Cys-64/Cys-81.

Belongs to the neurotoxin 10 (Hwtx-1) family. 13 (Hntx-13) subfamily. As to expression, expressed by the venom gland.

It is found in the secreted. In terms of biological role, ion channel inhibitor. In Cyriopagopus hainanus (Chinese bird spider), this protein is U7-theraphotoxin-Hhn1a 1.